Consider the following 76-residue polypeptide: Putative Fe(2+) transport protein A (76 aa).

It belongs to the FeoA family.

In terms of biological role, might be involved in Fe(2+) ion uptake. The polypeptide is Putative Fe(2+) transport protein A (Helicobacter pylori (strain ATCC 700392 / 26695) (Campylobacter pylori)).